The sequence spans 178 residues: Interleukin-10 (178 aa).

The first 18 residues, 1-18 (MPRSALLCCLILLAGVAA), serve as a signal peptide directing secretion. Intrachain disulfides connect cysteine 30–cysteine 126 and cysteine 80–cysteine 132. The N-linked (GlcNAc...) asparagine glycan is linked to asparagine 134.

Belongs to the IL-10 family. As to quaternary structure, homodimer. Interacts with IL10RA and IL10RB.

The protein localises to the secreted. Functionally, major immune regulatory cytokine that acts on many cells of the immune system where it has profound anti-inflammatory functions, limiting excessive tissue disruption caused by inflammation. Mechanistically, IL10 binds to its heterotetrameric receptor comprising IL10RA and IL10RB leading to JAK1 and STAT2-mediated phosphorylation of STAT3. In turn, STAT3 translocates to the nucleus where it drives expression of anti-inflammatory mediators. Targets antigen-presenting cells (APCs) such as macrophages and monocytes and inhibits their release of pro-inflammatory cytokines including granulocyte-macrophage colony-stimulating factor /GM-CSF, granulocyte colony-stimulating factor/G-CSF, IL-1 alpha, IL-1 beta, IL-6, IL-8 and TNF-alpha. Also interferes with antigen presentation by reducing the expression of MHC-class II and co-stimulatory molecules, thereby inhibiting their ability to induce T cell activation. In addition, controls the inflammatory response of macrophages by reprogramming essential metabolic pathways including mTOR signaling. The protein is Interleukin-10 (IL10) of Lama glama (Llama).